We begin with the raw amino-acid sequence, 303 residues long: Glycine--tRNA ligase alpha subunit (303 aa).

The protein belongs to the class-II aminoacyl-tRNA synthetase family. Tetramer of two alpha and two beta subunits.

It localises to the cytoplasm. It catalyses the reaction tRNA(Gly) + glycine + ATP = glycyl-tRNA(Gly) + AMP + diphosphate. This Klebsiella pneumoniae subsp. pneumoniae (strain ATCC 700721 / MGH 78578) protein is Glycine--tRNA ligase alpha subunit.